A 353-amino-acid chain; its full sequence is Photosystem II D2 protein (353 aa).

At Thr2 the chain carries N-acetylthreonine. At Thr2 the chain carries Phosphothreonine. The helical transmembrane segment at 41–61 threads the bilayer; the sequence is CAYFALGGWFTGTTFVTSWYT. His118 is a binding site for chlorophyll a. Residues 125–141 traverse the membrane as a helical segment; that stretch reads GFMLRQFELARSVQLRP. Pheophytin a is bound by residues Gln130 and Asn143. The helical transmembrane segment at 153–166 threads the bilayer; the sequence is VFVSVFLIYPLGQS. Chlorophyll a is bound at residue His198. The chain crosses the membrane as a helical span at residues 208–228; that stretch reads AALLCAIHGATVENTLFEDGD. 2 residues coordinate a plastoquinone: His215 and Phe262. Fe cation is bound at residue His215. Position 269 (His269) interacts with Fe cation. The helical transmembrane segment at 279 to 295 threads the bilayer; sequence GLWMSALGVVGLALNLR.

It belongs to the reaction center PufL/M/PsbA/D family. As to quaternary structure, PSII is composed of 1 copy each of membrane proteins PsbA, PsbB, PsbC, PsbD, PsbE, PsbF, PsbH, PsbI, PsbJ, PsbK, PsbL, PsbM, PsbT, PsbX, PsbY, PsbZ, Psb30/Ycf12, at least 3 peripheral proteins of the oxygen-evolving complex and a large number of cofactors. It forms dimeric complexes. It depends on The D1/D2 heterodimer binds P680, chlorophylls that are the primary electron donor of PSII, and subsequent electron acceptors. It shares a non-heme iron and each subunit binds pheophytin, quinone, additional chlorophylls, carotenoids and lipids. There is also a Cl(-1) ion associated with D1 and D2, which is required for oxygen evolution. The PSII complex binds additional chlorophylls, carotenoids and specific lipids. as a cofactor.

The protein resides in the plastid. It is found in the chloroplast thylakoid membrane. It catalyses the reaction 2 a plastoquinone + 4 hnu + 2 H2O = 2 a plastoquinol + O2. Functionally, photosystem II (PSII) is a light-driven water:plastoquinone oxidoreductase that uses light energy to abstract electrons from H(2)O, generating O(2) and a proton gradient subsequently used for ATP formation. It consists of a core antenna complex that captures photons, and an electron transfer chain that converts photonic excitation into a charge separation. The D1/D2 (PsbA/PsbD) reaction center heterodimer binds P680, the primary electron donor of PSII as well as several subsequent electron acceptors. D2 is needed for assembly of a stable PSII complex. This chain is Photosystem II D2 protein, found in Morus indica (Mulberry).